A 263-amino-acid polypeptide reads, in one-letter code: Mannose-specific lectin 2 (263 aa).

The signal sequence occupies residues 1 to 24 (MAKSLVLSSLLLALLLAAPLASLA). Bulb-type lectin domains lie at 26-136 (NNVL…APNR) and 150-260 (RNVL…SSAS). Intrachain disulfides connect Cys54–Cys76 and Cys178–Cys203.

In terms of assembly, heterotetramer of 2 domain 1 and 2 domain 2 chains arranged as a dimer of domain 1/domain 2 heterodimers.

Functionally, mannose-specific lectin. Has weak agglutinating activity towards trypsin-treated erythrocytes from rabbit but not from human. The sequence is that of Mannose-specific lectin 2 from Crocus vernus (Dutch crocus).